Reading from the N-terminus, the 390-residue chain is Lipid-A-disaccharide synthase (390 aa).

This sequence belongs to the LpxB family.

The catalysed reaction is a lipid X + a UDP-2-N,3-O-bis[(3R)-3-hydroxyacyl]-alpha-D-glucosamine = a lipid A disaccharide + UDP + H(+). Its pathway is bacterial outer membrane biogenesis; LPS lipid A biosynthesis. Condensation of UDP-2,3-diacylglucosamine and 2,3-diacylglucosamine-1-phosphate to form lipid A disaccharide, a precursor of lipid A, a phosphorylated glycolipid that anchors the lipopolysaccharide to the outer membrane of the cell. The protein is Lipid-A-disaccharide synthase of Rickettsia felis (strain ATCC VR-1525 / URRWXCal2) (Rickettsia azadi).